Here is a 688-residue protein sequence, read N- to C-terminus: Collagen alpha-2(IX) chain (688 aa).

Residues 1 to 22 (MAPAADPRSLLVLLQVLGLALA) form the signal peptide. Residues 26-162 (GLPGEPGPPG…PGKPGRPGTI (137 aa)) form a triple-helical region 4 (COL4) region. Disordered stretches follow at residues 26–520 (GLPG…RDAS), 549–578 (GATGMMGPPGPPGPPGYPGKQGPHGHPGPR), and 590–662 (IGNT…LPGF). Pro residues-rich tracts occupy residues 30–42 (EPGPPGPPGPPGV) and 105–126 (LPGPPGLPGPGFAGPPGPPGPV). Positions 128–138 (LPGEIGLTGPK) are enriched in low complexity. Over residues 143–156 (PEGPSGPPGPPGKP) the composition is skewed to pro residues. The residue at position 159 (P159) is a 4-hydroxyproline. A nonhelical region 4 (NC4) region spans residues 163–179 (QGLEGSADFLCPTNCPA). The O-linked (Xyl...) (glycosaminoglycan) serine glycan is linked to S168. The segment at 180 to 518 (GVKGPPGLQG…PGRQGVAGRD (339 aa)) is triple-helical region 3 (COL3). K182 carries the 5-hydroxylysine modification. K182 carries O-linked (Gal...) hydroxylysine glycosylation. Low complexity-rich tracts occupy residues 251–265 (KGMVGSVGAAGSPGE) and 394–412 (PVGQPGPQGRQGPKGEQGP). The segment covering 435-444 (GPRGGVGDPG) has biased composition (gly residues). Positions 497 to 506 (RGLVGDRGLP) are enriched in low complexity. The nonhelical region 3 (NC3) stretch occupies residues 519–548 (ASDQHIEDVVLKMLQEQLAEMAVSAKREAL). The triple-helical region 2 (COL2) stretch occupies residues 549 to 631 (GATGMMGPPG…PGLPGRPGQA (83 aa)). Residues 556–565 (PPGPPGPPGY) show a composition bias toward pro residues. Over residues 598–610 (KRGEKGDQGEVGR) the composition is skewed to basic and acidic residues. The tract at residues 632–633 (IN) is nonhelical region 2 (NC2). A triple-helical region 1 (COL1) region spans residues 634 to 663 (GKDGDRGAPGAPGEAGRPGLPGPIGLPGFC). Low complexity predominate over residues 641–651 (APGAPGEAGRP). The nonhelical region 1 (NC1) stretch occupies residues 664-688 (EPAACLGASAYASGRLTEPGSIKGP).

It belongs to the fibril-associated collagens with interrupted helices (FACIT) family. As to quaternary structure, heterotrimer of an alpha 1(IX), an alpha 2(IX) and an alpha 3(IX) chain. The chains are linked to each other by interchain disulfide bonds. Trimers are also cross-linked via hydroxylysines. Prolines at the third position of the tripeptide repeating unit (G-X-Y) are hydroxylated in some or all of the chains. Post-translationally, covalently linked to the telopeptides of type II collagen by hydroxylysine-derived cross-links.

It is found in the secreted. The protein resides in the extracellular space. The protein localises to the extracellular matrix. In terms of biological role, structural component of hyaline cartilage and vitreous of the eye. In Bos taurus (Bovine), this protein is Collagen alpha-2(IX) chain.